A 776-amino-acid chain; its full sequence is GATOR2 complex protein Wdr24 (776 aa).

WD repeat units lie at residues 63–103 (NLSY…RQKQ), 109–149 (EHER…SINT), 152–192 (CNSE…KCMV), 196–235 (AHYG…GLEH), 238–280 (HTIA…IPFA), and 284–326 (EHTN…ALKA). Residues 466–490 (HRSSFSNQKNPMNSRRATQVASDWP) are disordered. The segment covering 469-490 (SFSNQKNPMNSRRATQVASDWP) has biased composition (polar residues). Residues 703–726 (NCGECGRPMGGKVGWYCDKCKSMQ) form a C4-type zinc finger. Residues Cys704, Cys707, Cys719, Cys722, Cys730, Cys733, Cys744, Cys747, His749, His752, His755, Cys766, Cys769, His771, and Cys773 each coordinate Zn(2+). The RING-type; atypical zinc-finger motif lies at 728 to 776 (AKCCVCGLIVRGVYAWCQGCSHGGHIEHLQKYFAKHSKCPKCGHLCAYS).

Belongs to the WD repeat WDR24 family. Component of the GATOR complex consisting of mio, Nup44A/Seh1, Im11, Nplr3, Nplr2, Wdr24, Wdr59 and Sec13. Within the GATOR complex, probable component of the GATOR2 subcomplex which is likely composed of mio, Nup44A/Seh1, Wdr24, Wdr59 and Sec13. Interacts with Nup44A/Seh1. Interacts with mio. Interacts with Nplr3. The GATOR2 complex associates with unmet in the absence of S-adenosyl-L-methionine; the mio-Wdr24-Nup44A subcomplex is essential and sufficient for this interaction while Wdr59 and Sec13 are dispensable. This association acts as a nutrient sensor to inhibit mTORC1 signaling in the absence of methionine.

The protein resides in the lysosome. Its subcellular location is the cytoplasmic vesicle. It is found in the autophagosome. The enzyme catalyses S-ubiquitinyl-[E2 ubiquitin-conjugating enzyme]-L-cysteine + [acceptor protein]-L-lysine = [E2 ubiquitin-conjugating enzyme]-L-cysteine + N(6)-ubiquitinyl-[acceptor protein]-L-lysine.. It participates in protein modification; protein ubiquitination. Functionally, an essential component of the GATOR subcomplex GATOR2 which functions as an activator of the amino acid-sensing branch of the mTORC1 signaling pathway. The two GATOR subcomplexes, GATOR1 and GATOR2, regulate the mTORC1 pathway in order to mediate metabolic homeostasis, female gametogenesis and the response to amino acid limitation and complete starvation. GATOR2 activates the mTORC1 signaling pathway through the inhibition of the GATOR1 subcomplex, controlling the switch to cell proliferation and growth under nutrient replete conditions and during female oocyte development. GATOR2 probably acts as an E3 ubiquitin-protein ligase toward GATOR1. In the presence of abundant amino acids, the GATOR2 complex mediates ubiquitination of components of the GATOR1 complex, leading to GATOR1 inactivation. This GATOR2 component is required for activating mTORC1 and promoting cell growth in both germline and somatic cells. In addition to its role in regulation of the mTORC1 complex, functions independently of mTORC1 to promote the acidification of lysosomes and facilitates autophagic flux. In Drosophila melanogaster (Fruit fly), this protein is GATOR2 complex protein Wdr24.